Consider the following 178-residue polypeptide: Ribosome maturation factor RimM (178 aa).

Residues 99–178 (EGDFYWHDLI…TIEVDWDAGF (80 aa)) enclose the PRC barrel domain.

It belongs to the RimM family. As to quaternary structure, binds ribosomal protein uS19.

It localises to the cytoplasm. Its function is as follows. An accessory protein needed during the final step in the assembly of 30S ribosomal subunit, possibly for assembly of the head region. Essential for efficient processing of 16S rRNA. May be needed both before and after RbfA during the maturation of 16S rRNA. It has affinity for free ribosomal 30S subunits but not for 70S ribosomes. This Mannheimia succiniciproducens (strain KCTC 0769BP / MBEL55E) protein is Ribosome maturation factor RimM.